The primary structure comprises 552 residues: Chaperonin GroEL 3 (552 aa).

ATP-binding positions include 30-33 (TLGP), Lys51, 87-91 (DGTTT), Gly415, and Asp495.

Belongs to the chaperonin (HSP60) family. Forms a cylinder of 14 subunits composed of two heptameric rings stacked back-to-back. Interacts with the co-chaperonin GroES.

It localises to the cytoplasm. It carries out the reaction ATP + H2O + a folded polypeptide = ADP + phosphate + an unfolded polypeptide.. In terms of biological role, together with its co-chaperonin GroES, plays an essential role in assisting protein folding. The GroEL-GroES system forms a nano-cage that allows encapsulation of the non-native substrate proteins and provides a physical environment optimized to promote and accelerate protein folding. In Mesorhizobium japonicum (strain LMG 29417 / CECT 9101 / MAFF 303099) (Mesorhizobium loti (strain MAFF 303099)), this protein is Chaperonin GroEL 3.